A 75-amino-acid chain; its full sequence is Transaldolase (75 aa).

This sequence belongs to the transaldolase family. Type 1 subfamily. As to quaternary structure, homodimer. Post-translationally, phosphorylated. Predominantly expressed in Y-organs.

It is found in the cytoplasm. It catalyses the reaction D-sedoheptulose 7-phosphate + D-glyceraldehyde 3-phosphate = D-erythrose 4-phosphate + beta-D-fructose 6-phosphate. It functions in the pathway carbohydrate degradation; pentose phosphate pathway; D-glyceraldehyde 3-phosphate and beta-D-fructose 6-phosphate from D-ribose 5-phosphate and D-xylulose 5-phosphate (non-oxidative stage): step 2/3. In terms of biological role, transaldolase is important for the balance of metabolites in the pentose-phosphate pathway. May play a role in the conversion of sterols into ecdysteroids via NADPH. The chain is Transaldolase from Carcinus maenas (Common shore crab).